Consider the following 243-residue polypeptide: tRNA (guanine-N(1)-)-methyltransferase (243 aa).

Residues G111 and 131-136 (IGDYVL) contribute to the S-adenosyl-L-methionine site.

It belongs to the RNA methyltransferase TrmD family. As to quaternary structure, homodimer.

It is found in the cytoplasm. It catalyses the reaction guanosine(37) in tRNA + S-adenosyl-L-methionine = N(1)-methylguanosine(37) in tRNA + S-adenosyl-L-homocysteine + H(+). Functionally, specifically methylates guanosine-37 in various tRNAs. The chain is tRNA (guanine-N(1)-)-methyltransferase from Brevibacillus brevis (strain 47 / JCM 6285 / NBRC 100599).